The primary structure comprises 742 residues: Pyriculol/pyriculariol biosynthesis cluster transcription factor 1 (742 aa).

Positions 23–49 (CVLCQHRKIKCDRSFPCANCQRANVQC) form a DNA-binding region, zn(2)-C6 fungal-type. A disordered region spans residues 85–116 (GKPDIARLTTKRSSLSQSPPKGEEPLPEWNRH). Over residues 105–116 (KGEEPLPEWNRH) the composition is skewed to basic and acidic residues.

It localises to the nucleus. In terms of biological role, transcriptional regulator; part of the gene cluster that mediates the biosynthesis of pyriculol and pyriculariol, two heptaketides that induce lesion formation upon application on rice leaves but are dispensable for pathogenicity. With TRF2, negatively regulates the expression of the gene cluster and the subsequent pyriculol and pyriculariol production. The chain is Pyriculol/pyriculariol biosynthesis cluster transcription factor 1 from Pyricularia oryzae (strain 70-15 / ATCC MYA-4617 / FGSC 8958) (Rice blast fungus).